The sequence spans 465 residues: UDP-N-acetylmuramate--L-alanine ligase (465 aa).

112 to 118 (GTHGKTT) contacts ATP.

This sequence belongs to the MurCDEF family.

The protein localises to the cytoplasm. It carries out the reaction UDP-N-acetyl-alpha-D-muramate + L-alanine + ATP = UDP-N-acetyl-alpha-D-muramoyl-L-alanine + ADP + phosphate + H(+). It participates in cell wall biogenesis; peptidoglycan biosynthesis. Functionally, cell wall formation. The protein is UDP-N-acetylmuramate--L-alanine ligase of Burkholderia vietnamiensis (strain G4 / LMG 22486) (Burkholderia cepacia (strain R1808)).